Here is a 668-residue protein sequence, read N- to C-terminus: Potassium-transporting ATPase ATP-binding subunit (668 aa).

The next 4 helical transmembrane spans lie at 31–51 (MFLTEVSLFVSIFIYIFPSFF), 62–82 (FYVAVVVLLFLTVFFSSISTA), 213–233 (TVFLSGLTLIFLVITASIFAI), and 243–263 (IVMLIVLLIALIPTTIGALLP). The 4-aspartylphosphate intermediate role is filled by Asp-298. ATP is bound by residues Asp-335, Glu-339, 367 to 374 (FSSETKFS), and Lys-385. Residues Asp-504 and Asp-508 each coordinate Mg(2+). Transmembrane regions (helical) follow at residues 573–593 (YFVIIPAIFYMFPSLSLVNIL), 599–619 (IVAVTSALIFNTIIIVFLIPL), and 644–664 (IGGVITPFIAIKLIYMLLIAW).

Belongs to the cation transport ATPase (P-type) (TC 3.A.3) family. Type IA subfamily. In terms of assembly, the system is composed of three essential subunits: KdpA, KdpB and KdpC.

It localises to the cell membrane. The catalysed reaction is K(+)(out) + ATP + H2O = K(+)(in) + ADP + phosphate + H(+). Functionally, part of the high-affinity ATP-driven potassium transport (or Kdp) system, which catalyzes the hydrolysis of ATP coupled with the electrogenic transport of potassium into the cytoplasm. This subunit is responsible for energy coupling to the transport system and for the release of the potassium ions to the cytoplasm. The protein is Potassium-transporting ATPase ATP-binding subunit of Thermoplasma volcanium (strain ATCC 51530 / DSM 4299 / JCM 9571 / NBRC 15438 / GSS1).